A 459-amino-acid chain; its full sequence is Elongation factor 1-alpha (459 aa).

N,N,N-trimethylglycine is present on Gly-2. Lys-3 is modified (N6,N6-dimethyllysine; alternate). Position 3 is an N6-methyllysine; alternate (Lys-3). The tr-type G domain maps to 5-240 (KLHVNVVVIG…DAIEPPTRPT (236 aa)). Residues 14–21 (GHVDSGKS) are G1. 14 to 21 (GHVDSGKS) serves as a coordination point for GTP. Lys-30 carries the post-translational modification N6-methyllysine. Residues 70 to 74 (GITID) are G2. Position 79 is an N6,N6,N6-trimethyllysine (Lys-79). Positions 91–94 (DAPG) are G3. Residues 91–95 (DAPGH) and 153–156 (NKMD) contribute to the GTP site. The tract at residues 153–156 (NKMD) is G4. Residues 192–194 (SGW) form a G5 region. Lys-316 bears the N6,N6-dimethyllysine; alternate mark. Position 316 is an N6-methyllysine; alternate (Lys-316). Position 390 is an N6-methyllysine (Lys-390).

It belongs to the TRAFAC class translation factor GTPase superfamily. Classic translation factor GTPase family. EF-Tu/EF-1A subfamily.

Its subcellular location is the cytoplasm. This protein promotes the GTP-dependent binding of aminoacyl-tRNA to the A-site of ribosomes during protein biosynthesis. The chain is Elongation factor 1-alpha (TEF1) from Cryptococcus neoformans var. neoformans serotype D (strain B-3501A) (Filobasidiella neoformans).